Here is a 332-residue protein sequence, read N- to C-terminus: 2,3-diketo-L-gulonate reductase (332 aa).

The active-site Proton donor is His-44. Residues 168-174 (ITMVDMS), 224-225 (WK), and 304-306 (GHE) contribute to the NAD(+) site.

The protein belongs to the LDH2/MDH2 oxidoreductase family. DlgD subfamily. In terms of assembly, homodimer.

The protein localises to the cytoplasm. The catalysed reaction is 3-dehydro-L-gulonate + NAD(+) = 2,3-dioxo-L-gulonate + NADH + H(+). It catalyses the reaction 3-dehydro-L-gulonate + NADP(+) = 2,3-dioxo-L-gulonate + NADPH + H(+). Functionally, catalyzes the reduction of 2,3-diketo-L-gulonate in the presence of NADH, to form 3-keto-L-gulonate. The sequence is that of 2,3-diketo-L-gulonate reductase from Pasteurella multocida (strain Pm70).